The following is a 689-amino-acid chain: Glycine--tRNA ligase beta subunit (689 aa).

It belongs to the class-II aminoacyl-tRNA synthetase family. As to quaternary structure, tetramer of two alpha and two beta subunits.

It localises to the cytoplasm. It carries out the reaction tRNA(Gly) + glycine + ATP = glycyl-tRNA(Gly) + AMP + diphosphate. In Lacticaseibacillus casei (strain BL23) (Lactobacillus casei), this protein is Glycine--tRNA ligase beta subunit.